A 348-amino-acid chain; its full sequence is Dihydroorotate dehydrogenase (quinone) (348 aa).

FMN is bound by residues 60–64 (AGLDK) and Thr-84. Lys-64 contributes to the substrate binding site. 109 to 113 (NRMGF) serves as a coordination point for substrate. FMN is bound by residues Asn-137 and Asn-170. Residue Asn-170 participates in substrate binding. The active-site Nucleophile is Ser-173. Asn-175 contributes to the substrate binding site. The FMN site is built by Lys-215 and Thr-243. 244–245 (NT) serves as a coordination point for substrate. FMN-binding positions include Gly-266, Gly-295, and 316–317 (YS).

This sequence belongs to the dihydroorotate dehydrogenase family. Type 2 subfamily. In terms of assembly, monomer. The cofactor is FMN.

Its subcellular location is the cell membrane. The enzyme catalyses (S)-dihydroorotate + a quinone = orotate + a quinol. The protein operates within pyrimidine metabolism; UMP biosynthesis via de novo pathway; orotate from (S)-dihydroorotate (quinone route): step 1/1. Catalyzes the conversion of dihydroorotate to orotate with quinone as electron acceptor. The protein is Dihydroorotate dehydrogenase (quinone) of Nitrosospira multiformis (strain ATCC 25196 / NCIMB 11849 / C 71).